The sequence spans 520 residues: Amine oxidase [flavin-containing] B (520 aa).

At S2 the chain carries N-acetylserine. Residues 2–489 lie on the Cytoplasmic side of the membrane; the sequence is SGKCDVVVVG…TFLERHLPSV (488 aa). Position 52 is an N6-acetyllysine (K52). At C397 the chain carries S-8alpha-FAD cysteine. The helical; Anchor for type IV membrane protein transmembrane segment at 490–516 threads the bilayer; sequence PGLLRLIGLTAIFSATALGVLAHKRGL. The Mitochondrial intermembrane segment spans residues 517 to 520; sequence LVRV.

This sequence belongs to the flavin monoamine oxidase family. In terms of assembly, monomer, homo- or heterodimer (containing two subunits of similar size). Each subunit contains a covalently bound flavin. Enzymatically active as monomer. Requires FAD as cofactor.

Its subcellular location is the mitochondrion outer membrane. The enzyme catalyses a secondary aliphatic amine + O2 + H2O = a primary amine + an aldehyde + H2O2. It catalyses the reaction (R)-adrenaline + O2 + H2O = (R)-3,4-dihydroxymandelaldehyde + methylamine + H2O2. The catalysed reaction is a primary methyl amine + O2 + H2O = an aldehyde + H2O2 + NH4(+). It carries out the reaction benzylamine + O2 + H2O = benzaldehyde + H2O2 + NH4(+). The enzyme catalyses dopamine + O2 + H2O = 3,4-dihydroxyphenylacetaldehyde + H2O2 + NH4(+). It catalyses the reaction tyramine + O2 + H2O = (4-hydroxyphenyl)acetaldehyde + H2O2 + NH4(+). The catalysed reaction is (R)-noradrenaline + O2 + H2O = (R)-3,4-dihydroxymandelaldehyde + H2O2 + NH4(+). It carries out the reaction 2-phenylethylamine + O2 + H2O = 2-phenylacetaldehyde + H2O2 + NH4(+). The enzyme catalyses N-acetylputrescine + O2 + H2O = 4-acetamidobutanal + H2O2 + NH4(+). Functionally, catalyzes the oxidative deamination of primary and some secondary amines such as neurotransmitters, and exogenous amines including the tertiary amine, neurotoxin 1-methyl-4-phenyl-1,2,3,6-tetrahydropyridine (MPTP), with concomitant reduction of oxygen to hydrogen peroxide and participates in the metabolism of neuroactive and vasoactive amines in the central nervous system and peripheral tissues. Preferentially degrades benzylamine and phenylethylamine. The sequence is that of Amine oxidase [flavin-containing] B from Canis lupus familiaris (Dog).